A 167-amino-acid chain; its full sequence is Endoribonuclease YbeY (167 aa).

Zn(2+) contacts are provided by histidine 131, histidine 135, and histidine 141.

This sequence belongs to the endoribonuclease YbeY family. The cofactor is Zn(2+).

The protein resides in the cytoplasm. Functionally, single strand-specific metallo-endoribonuclease involved in late-stage 70S ribosome quality control and in maturation of the 3' terminus of the 16S rRNA. In Rickettsia conorii (strain ATCC VR-613 / Malish 7), this protein is Endoribonuclease YbeY.